Reading from the N-terminus, the 540-residue chain is MRAHEILNNPFLNKGTAFTMKERQELGLIGLLPPTVQTIEEQAEQTYEQYLTKPSDLEKRHFLMEIFNTNRTLFYYLFNKHIVEFNPVVYDPTIADTIENYSHLFVDPQYAAYLDINHPENITETLKNAAGDREIRLIVVTDAEGILGIGDWGTQGVDISVGKLMIYTAAAGIDPASVLPVVIDAGTNRKELLEDHLYLGNHQERIYGDQYYSFVDQFVETAESIFPKLYLHWEDFGRSNAATILNNYKTKIPTFNDDIQGTGIVVLGGIFGSLDITGEKLTDQVYLCYGGGSAGAGIAGRVHAEMVSEGLSEEEAYKHFFMIDQQGLLFDDMEDLTPAQKPFAKKRADYKDAGDMTDLLNVVKTVKPTILVGTSTNPGAFTKEVVEAMCANTERPVIFPISNPTKKMETTAEQVIEWSDGKAFVATGVPSGTISYKGVDYQIGQANNSLIYPGLGLGMLASEAKLLTDEMIGAAAHSLSGLVDPGKPGAPVLPPFEFVADVSIKVAEAVAKKAQEQGLTESKETDMAKAVRDLKWYPEY.

Tyr-90 functions as the Proton donor in the catalytic mechanism. The active-site Proton acceptor is the Lys-163. Residue Lys-163 coordinates substrate. Mn(2+) contacts are provided by Glu-234, Asp-235, and Asp-258. NAD(+) contacts are provided by residues 291 to 294 (GGSA), Asn-403, and Asn-448. Residue Asn-448 coordinates substrate.

This sequence belongs to the malic enzymes family. In terms of assembly, homodimer. It depends on Mn(2+) as a cofactor. The cofactor is NAD(+).

It carries out the reaction (S)-malate + H(+) = (S)-lactate + CO2. In terms of biological role, involved in the malolactic fermentation (MLF) of wine, which results in a natural decrease in acidity and favorable changes in wine flavors. Catalyzes the decarboxylation of L-malate to L-lactate. This is Malolactic enzyme from Lactococcus lactis subsp. lactis (strain IL1403) (Streptococcus lactis).